Reading from the N-terminus, the 275-residue chain is Translation initiation factor 2 subunit alpha (275 aa).

Residues 12–83 enclose the S1 motif domain; the sequence is GELVVATVKR…KKGHIDLSLR (72 aa).

The protein belongs to the eIF-2-alpha family. As to quaternary structure, heterotrimer composed of an alpha, a beta and a gamma chain.

Functionally, eIF-2 functions in the early steps of protein synthesis by forming a ternary complex with GTP and initiator tRNA. In Pyrococcus furiosus (strain ATCC 43587 / DSM 3638 / JCM 8422 / Vc1), this protein is Translation initiation factor 2 subunit alpha.